A 612-amino-acid polypeptide reads, in one-letter code: Zinc metalloproteinase-disintegrin-like HV1 (612 aa).

Residues 1-20 (MIQVLLVTICLAVFPYQGSS) form the signal peptide. The propeptide occupies 21–188 (IILESGNVND…SIKEDSQSNL (168 aa)). Residues 200–396 (KYVKFFLVAD…NMPQCILKKP (197 aa)) enclose the Peptidase M12B domain. N-linked (GlcNAc...) asparagine glycosylation occurs at Asn-219. Disulfide bonds link Cys-311-Cys-391, Cys-351-Cys-375, and Cys-353-Cys-358. His-336 is a Zn(2+) binding site. Glu-337 is an active-site residue. The Zn(2+) site is built by His-340 and His-346. A Disintegrin domain is found at 404–489 (PPVCGNYFVE…AECTDRFQRN (86 aa)). Residues Val-406, Asn-409, Phe-411, Glu-413, Glu-416, and Asp-419 each coordinate Ca(2+). Disulfide bonds link Cys-407/Cys-436, Cys-418/Cys-431, Cys-420/Cys-426, Cys-430/Cys-453, Cys-444/Cys-450, Cys-449/Cys-475, Cys-462/Cys-482, Cys-469/Cys-500, Cys-493/Cys-505, Cys-512/Cys-562, Cys-527/Cys-573, Cys-540/Cys-550, Cys-557/Cys-599, and Cys-593/Cys-605. Residues 468–470 (ECD) carry the D/ECD-tripeptide motif. 5 residues coordinate Ca(2+): Asp-470, Met-471, Asp-473, Asp-484, and Arg-485. Asn-502 carries an N-linked (GlcNAc...) asparagine glycan. An N-linked (GlcNAc...) asparagine glycan is attached at Asn-609.

It belongs to the venom metalloproteinase (M12B) family. P-III subfamily. P-IIIc sub-subfamily. Homodimer; disulfide-linked. It depends on Zn(2+) as a cofactor. Expressed by the venom gland.

Its subcellular location is the secreted. Inhibited by EDTA and EGTA. Its function is as follows. Snake venom zinc metalloproteinase-disintegrin-like that potently activates prothrombin (F2). Does not elicit any hemorrhagic response. Barely inhibits collagen-induced platelet aggregation. Hydrolyzes the alpha-chain of fibrin and fibrinogen (FGA), without affecting the Bbeta- and gamma-chains. Induces apoptosis in cultured vascular endothelial cells. This chain is Zinc metalloproteinase-disintegrin-like HV1, found in Protobothrops flavoviridis (Habu).